A 141-amino-acid chain; its full sequence is LOB domain-containing protein 34 (141 aa).

One can recognise an LOB domain in the interval 16–119 (NQCAACRHQR…SPLNYVAPVI (104 aa)).

It belongs to the LOB domain-containing protein family.

This is LOB domain-containing protein 34 (LBD34) from Arabidopsis thaliana (Mouse-ear cress).